A 69-amino-acid polypeptide reads, in one-letter code: SWDSIWKSAKNKMDKIMRQKVAKWMAKKEGKSVEEVQAKVDAMSKKDIRLHVISHYGKKAFEQLSKSLE.

Belongs to the cationic peptide 06 (cytoinsectotoxin) family. In terms of tissue distribution, expressed by the venom gland.

The protein localises to the secreted. Its function is as follows. Insecticidal and antimicrobial peptide. Has insecticidal activity against larvae of flesh fly S.carnaria. Has antibacterial activity against Gram-positive bacterium B.subtilis B-501 (MIC=1.25 uM) and Gram-negative bacterium E.coli DH5alpha (MIC=2.5 uM). The polypeptide is Cytoinsectotoxin-2a (Lachesana tarabaevi (Spider)).